We begin with the raw amino-acid sequence, 342 residues long: Heat-inducible transcription repressor HrcA (342 aa).

Belongs to the HrcA family.

Negative regulator of class I heat shock genes (grpE-dnaK-dnaJ and groELS operons). Prevents heat-shock induction of these operons. The sequence is that of Heat-inducible transcription repressor HrcA from Onion yellows phytoplasma (strain OY-M).